Consider the following 441-residue polypeptide: Cysteine proteinase (441 aa).

Cys249 and Cys290 are disulfide-bonded. Cys252 is a catalytic residue. Asn270 and Asn345 each carry an N-linked (GlcNAc...) asparagine glycan. Residues His381 and Asn403 contribute to the active site.

It belongs to the peptidase C1 family.

The sequence is that of Cysteine proteinase (TACP) from Theileria annulata.